Reading from the N-terminus, the 434-residue chain is Probable exopolygalacturonase X (434 aa).

An N-terminal signal peptide occupies residues 1–23 (MKFLHTVAQTATLLLSLGASVEG). The tract at residues 35–54 (HHPFRPLPASTPRTKTCHVR) is disordered. N-linked (GlcNAc...) asparagine glycosylation is found at N113, N129, and N199. The PbH1 1 repeat unit spans residues 231–252 (SSNIVIQNSVVNNGDDCVSFKP). D245 functions as the Proton donor in the catalytic mechanism. Cysteines 247 and 264 form a disulfide. N253 and N265 each carry an N-linked (GlcNAc...) asparagine glycan. The PbH1 2 repeat unit spans residues 254–274 (STDILVQNMHCNGSHGISVGS). H268 is a catalytic residue. 5 N-linked (GlcNAc...) asparagine glycosylation sites follow: N292, N297, N329, N354, and N364. The stretch at 327–348 (VSNITYDRMYIENVDWAIEVTQ) is one PbH1 3 repeat. Residues 362 to 394 (PSNLTISDVHIKNMWGTTSGKRDPNVGTIVCSS) form a PbH1 4 repeat. A disulfide bond links C392 and C398. 2 N-linked (GlcNAc...) asparagine glycosylation sites follow: N407 and N430.

It belongs to the glycosyl hydrolase 28 family.

The protein resides in the secreted. The catalysed reaction is [(1-&gt;4)-alpha-D-galacturonosyl](n) + H2O = alpha-D-galacturonate + [(1-&gt;4)-alpha-D-galacturonosyl](n-1). Functionally, specific in hydrolyzing the terminal glycosidic bond of polygalacturonic acid and oligogalacturonates. In Aspergillus terreus (strain NIH 2624 / FGSC A1156), this protein is Probable exopolygalacturonase X (pgaX).